The primary structure comprises 1083 residues: Protein HOS4 (1083 aa).

Disordered regions lie at residues 1-233 and 267-328; these read MNET…RKLV and SSLF…YRDS. A phosphoserine mark is found at Ser-14 and Ser-16. Over residues 24-62 the composition is skewed to basic and acidic residues; that stretch reads TRREELEKISKQETSEEEDTAGKHEQRETLSEEVSDKFP. Position 37 is a phosphothreonine (Thr-37). Position 67 is a phosphoserine (Ser-67). The segment covering 67–85 has biased composition (polar residues); sequence SFRSQTTSVHQATQNNLNA. The span at 86–118 shows a compositional bias: basic and acidic residues; the sequence is KESEDLAHKNDASSHEGEVNGDSRPDDVPETNE. Positions 135-149 are enriched in polar residues; the sequence is PNVRNVDIQNHQPFS. A compositionally biased stretch (basic and acidic residues) spans 151–166; the sequence is DQLRAMLKEPKRKTVD. Residues 167–185 show a composition bias toward acidic residues; that stretch reads DFIEEEGLGAVEEEDLSDE. Basic and acidic residues predominate over residues 186 to 207; sequence VLEKNTTEPENVEKDIEYSDSD. Residues 277-293 show a composition bias toward polar residues; the sequence is VKETNNNLSNMNSSPAQ. Ser-290 is modified (phosphoserine). Positions 300–310 are enriched in low complexity; sequence VSRSNDSNKSS. Over residues 314–323 the composition is skewed to basic residues; the sequence is VSKRPKQKKG. ANK repeat units lie at residues 329–359, 363–392, and 398–427; these read GGRT…DIND, AGNT…DVNI, and FGDT…DPTI. The segment at 472 to 516 is disordered; that stretch reads AGIHNDKSKNGNNAHTIDQPPFDNTTKAKNEKAADSPSMASNIDE. Positions 481–496 are enriched in polar residues; it reads NGNNAHTIDQPPFDNT. Ser-507 is modified (phosphoserine). ANK repeat units follow at residues 532–561 and 593–622; these read AGKE…KIDL and NKTS…DPTK. 2 disordered regions span residues 661 to 742 and 762 to 790; these read HSED…DDNE and DEEK…ISKI. Acidic residues predominate over residues 665–675; that stretch reads NNDDDDDDDNN. The residue at position 698 (Ser-698) is a Phosphoserine. The residue at position 700 (Thr-700) is a Phosphothreonine. The span at 721-740 shows a compositional bias: basic and acidic residues; sequence NNDRDVKESTTSDSRKRLDD. Ser-778 carries the post-translational modification Phosphoserine.

As to quaternary structure, identified in the Set3C complex with HOS2, HST1, SNT1, SIF2, CPR1 and SET3.

Unknown. Component of the Set3C complex, which is required to repress early/middle sporulation genes during meiosis. The sequence is that of Protein HOS4 (HOS4) from Saccharomyces cerevisiae (strain ATCC 204508 / S288c) (Baker's yeast).